Here is a 245-residue protein sequence, read N- to C-terminus: Putative insertion sequence ATP-binding protein y4pL (245 aa).

Residue 106-113 participates in ATP binding; sequence GPSGVGKS.

Belongs to the IS21/IS1162 putative ATP-binding protein family.

This chain is Putative insertion sequence ATP-binding protein y4pL, found in Sinorhizobium fredii (strain NBRC 101917 / NGR234).